We begin with the raw amino-acid sequence, 475 residues long: tRNA-2-methylthio-N(6)-dimethylallyladenosine synthase (475 aa).

Over residues 1-10 (MHETTLKREG) the composition is skewed to basic and acidic residues. The disordered stretch occupies residues 1–25 (MHETTLKREGASTPSNPTPSTHAAG). The span at 12 to 23 (STPSNPTPSTHA) shows a compositional bias: polar residues. In terms of domain architecture, MTTase N-terminal spans 27–144 (GKIYIRTFGC…LPELIRRRRD (118 aa)). Positions 36, 73, 107, 181, 185, and 188 each coordinate [4Fe-4S] cluster. The 234-residue stretch at 167 to 400 (RVEGATAFVS…QALINEQAAA (234 aa)) folds into the Radical SAM core domain. Residues 403-466 (QSMVGTRQRL…TNSLRGRVAG (64 aa)) form the TRAM domain.

The protein belongs to the methylthiotransferase family. MiaB subfamily. Monomer. It depends on [4Fe-4S] cluster as a cofactor.

Its subcellular location is the cytoplasm. It carries out the reaction N(6)-dimethylallyladenosine(37) in tRNA + (sulfur carrier)-SH + AH2 + 2 S-adenosyl-L-methionine = 2-methylsulfanyl-N(6)-dimethylallyladenosine(37) in tRNA + (sulfur carrier)-H + 5'-deoxyadenosine + L-methionine + A + S-adenosyl-L-homocysteine + 2 H(+). Catalyzes the methylthiolation of N6-(dimethylallyl)adenosine (i(6)A), leading to the formation of 2-methylthio-N6-(dimethylallyl)adenosine (ms(2)i(6)A) at position 37 in tRNAs that read codons beginning with uridine. The sequence is that of tRNA-2-methylthio-N(6)-dimethylallyladenosine synthase from Bordetella avium (strain 197N).